A 197-amino-acid polypeptide reads, in one-letter code: ATP-dependent Clp protease proteolytic subunit 1 (197 aa).

The active-site Nucleophile is the S96. Residue H121 is part of the active site.

This sequence belongs to the peptidase S14 family. As to quaternary structure, fourteen ClpP subunits assemble into 2 heptameric rings which stack back to back to give a disk-like structure with a central cavity, resembling the structure of eukaryotic proteasomes.

The protein resides in the cytoplasm. It carries out the reaction Hydrolysis of proteins to small peptides in the presence of ATP and magnesium. alpha-casein is the usual test substrate. In the absence of ATP, only oligopeptides shorter than five residues are hydrolyzed (such as succinyl-Leu-Tyr-|-NHMec, and Leu-Tyr-Leu-|-Tyr-Trp, in which cleavage of the -Tyr-|-Leu- and -Tyr-|-Trp bonds also occurs).. In terms of biological role, cleaves peptides in various proteins in a process that requires ATP hydrolysis. Has a chymotrypsin-like activity. Plays a major role in the degradation of misfolded proteins. In Synechococcus sp. (strain CC9902), this protein is ATP-dependent Clp protease proteolytic subunit 1.